The sequence spans 320 residues: uncharacterized protein (320 aa).

This sequence belongs to the NAD(P)-dependent epimerase/dehydratase family.

This is an uncharacterized protein from Staphylococcus saprophyticus subsp. saprophyticus (strain ATCC 15305 / DSM 20229 / NCIMB 8711 / NCTC 7292 / S-41).